The following is a 591-amino-acid chain: V-type ATP synthase alpha chain (591 aa).

232–239 (GPFGAGKT) lines the ATP pocket.

Belongs to the ATPase alpha/beta chains family.

It catalyses the reaction ATP + H2O + 4 H(+)(in) = ADP + phosphate + 5 H(+)(out). Its function is as follows. Produces ATP from ADP in the presence of a proton gradient across the membrane. The V-type alpha chain is a catalytic subunit. The protein is V-type ATP synthase alpha chain of Clostridium perfringens (strain SM101 / Type A).